We begin with the raw amino-acid sequence, 329 residues long: Diaminopimelate epimerase (329 aa).

Substrate is bound by residues asparagine 14 and asparagine 73. The active-site Proton donor is the cysteine 82. Residues 83–84 (GN), asparagine 170, asparagine 206, and 224–225 (ER) each bind substrate. Cysteine 233 functions as the Proton acceptor in the catalytic mechanism. 234 to 235 (GT) contributes to the substrate binding site.

This sequence belongs to the diaminopimelate epimerase family. As to quaternary structure, homodimer.

It localises to the cytoplasm. It catalyses the reaction (2S,6S)-2,6-diaminopimelate = meso-2,6-diaminopimelate. It functions in the pathway amino-acid biosynthesis; L-lysine biosynthesis via DAP pathway; DL-2,6-diaminopimelate from LL-2,6-diaminopimelate: step 1/1. In terms of biological role, catalyzes the stereoinversion of LL-2,6-diaminopimelate (L,L-DAP) to meso-diaminopimelate (meso-DAP), a precursor of L-lysine and an essential component of the bacterial peptidoglycan. This is Diaminopimelate epimerase from Listeria monocytogenes serotype 4b (strain F2365).